Reading from the N-terminus, the 520-residue chain is 2-isopropylmalate synthase (520 aa).

The Pyruvate carboxyltransferase domain maps to 5–268; it reads VYIFDTTLRD…YTDVNTKEIY (264 aa). 4 residues coordinate Mn(2+): aspartate 14, histidine 202, histidine 204, and asparagine 238. Positions 394 to 520 are regulatory domain; that stretch reads KVLHFQVQSG…RQEIREEGTV (127 aa).

It belongs to the alpha-IPM synthase/homocitrate synthase family. LeuA type 1 subfamily. Homodimer. It depends on Mn(2+) as a cofactor.

The protein resides in the cytoplasm. It catalyses the reaction 3-methyl-2-oxobutanoate + acetyl-CoA + H2O = (2S)-2-isopropylmalate + CoA + H(+). The protein operates within amino-acid biosynthesis; L-leucine biosynthesis; L-leucine from 3-methyl-2-oxobutanoate: step 1/4. Catalyzes the condensation of the acetyl group of acetyl-CoA with 3-methyl-2-oxobutanoate (2-ketoisovalerate) to form 3-carboxy-3-hydroxy-4-methylpentanoate (2-isopropylmalate). The chain is 2-isopropylmalate synthase from Aquifex aeolicus (strain VF5).